A 628-amino-acid polypeptide reads, in one-letter code: Chaperone protein HtpG (628 aa).

Residues 1–337 (MSEKKYTFET…SADLPLNVSR (337 aa)) are a; substrate-binding. The segment at 338 to 554 (EILQHNKVID…DYGMSLHMQK (217 aa)) is b. The segment at 555–628 (MMEEAGQGFM…FVKLVNKYIR (74 aa)) is c.

This sequence belongs to the heat shock protein 90 family. Homodimer.

Its subcellular location is the cytoplasm. Molecular chaperone. Has ATPase activity. This chain is Chaperone protein HtpG, found in Francisella tularensis subsp. novicida (strain U112).